A 2122-amino-acid chain; its full sequence is Pecanex-like protein 2 (2122 aa).

The next 2 membrane-spanning stretches (helical) occupy residues L36–F53 and A60–H82. 2 disordered regions span residues Q92–A164 and Q180–P250. 2 stretches are compositionally biased toward polar residues: residues S146–S157 and A185–R203. N288 carries N-linked (GlcNAc...) asparagine glycosylation. 2 stretches are compositionally biased toward low complexity: residues V392–A407 and P458–T476. Disordered regions lie at residues V392–N556 and V575–T634. A compositionally biased stretch (basic and acidic residues) spans S528–K538. N556 carries N-linked (GlcNAc...) asparagine glycosylation. Residues T599–K618 are compositionally biased toward basic and acidic residues. A compositionally biased stretch (polar residues) spans D625–T634. A run of 13 helical transmembrane segments spans residues V825–F845, L849–V869, Q882–L902, H933–I953, G976–C998, H1010–S1030, L1080–L1100, F1105–L1125, Y1174–N1194, S1218–F1238, E1245–L1265, F1270–A1290, and T1305–I1325. N-linked (GlcNAc...) asparagine glycans are attached at residues N1393, N1534, and N1802. Disordered regions lie at residues S1858 to P1943 and S1955 to H1991. The span at E1888–R1898 shows a compositional bias: basic and acidic residues. Residues S1922 to G1942 show a composition bias toward polar residues. A compositionally biased stretch (low complexity) spans S1968–S1981. N2039 carries an N-linked (GlcNAc...) asparagine glycan. A disordered region spans residues V2097 to Q2122. Residues T2112–Q2122 are compositionally biased toward polar residues.

Belongs to the pecanex family.

The protein localises to the membrane. May play a role in tumorigenesis. The chain is Pecanex-like protein 2 from Mus musculus (Mouse).